We begin with the raw amino-acid sequence, 299 residues long: Probable lipid kinase YegS-like (299 aa).

Residues 1-129 (MSERKALLIL…IDLGEVGGQM (129 aa)) enclose the DAGKc domain. ATP is bound by residues Thr-39, 65–71 (GDGTLRD), and Thr-92. Residues Leu-210, Asp-213, and Leu-215 each coordinate Mg(2+). Glu-268 acts as the Proton acceptor in catalysis.

It belongs to the diacylglycerol/lipid kinase family. YegS lipid kinase subfamily. Requires Mg(2+) as cofactor. The cofactor is Ca(2+).

It localises to the cytoplasm. Functionally, probably phosphorylates lipids; the in vivo substrate is unknown. This chain is Probable lipid kinase YegS-like, found in Pseudomonas fluorescens (strain ATCC BAA-477 / NRRL B-23932 / Pf-5).